A 545-amino-acid polypeptide reads, in one-letter code: MALTPSVCSISDVQGLQKDRTFHPSLWGDFFLTYQPPTAPKHAYMAERAEVLKEEVRKMVKSANEIQNILDLILTLQRLGLDNHYENEINELLSFVHDSDYDDKDLNLVSLRFYLLRKHGYDVSSDVFKCFQDKEGNFVVKDTKSLLSLYNAAHLRIHGEEVLDEAIIFTRGKLESVLDSLETTLADEVTLALQTPLFRRVRILETRNYIPIYEKEVARNEVILEFAKLNFNLLQLLYCEELKMITLWWKQLNVETNLSFIRDRIVEMHFWMTGACSEKKYSLTRTITTKMTAYITILDDIMDTHSTTEEAMLLAEAIYRCEENAAELLPEYMKDFYLYLLKTFDSVKHELGPNRSFRVFYLKELLKILVRGYSQEIKWRDEHYVPETIDEHLEVSKATVGAFQVACSSFVGMGDIITKEILDWLLSYPKLLKSMTTFVRLSNDIASTKREQTGGHHASTVQCYMMQHGTTIHDACEKIKELTEDTWKDMMKLYLTPTEQPKVIIQTVLDFARTAEFMYKKTDAFTFSHTIKDTIALLFVEPTLV.

Positions 299, 303, 443, 447, and 451 each coordinate Mg(2+). The DDXXD motif signature appears at 299-303; that stretch reads DDIMD.

Belongs to the terpene synthase family. It depends on Mg(2+) as a cofactor. Mn(2+) is required as a cofactor.

It is found in the cytoplasm. It carries out the reaction (2E,6E)-farnesyl diphosphate = beta-sesquiphellandrene + diphosphate. It participates in secondary metabolite biosynthesis; terpenoid biosynthesis. Its function is as follows. Sesquiterpene synthase converting farnesyl diphosphate into beta-sesquiphellandrene and six minor products, zingiberene, 7-epi-sesquithujene, sesquisabinene A, (E)-alpha-bergamotene, (E)-beta-farnesene and beta-bisabolene. Can also accept geranyl diphosphate as substrate, producing nine monoterpenes, with myrcene and limonene as the major products. This Sorghum bicolor (Sorghum) protein is Beta-sesquiphellandrene synthase (TPS2).